Here is a 223-residue protein sequence, read N- to C-terminus: Deoxyribose-phosphate aldolase (223 aa).

D89 functions as the Proton donor/acceptor in the catalytic mechanism. The active-site Schiff-base intermediate with acetaldehyde is K152. K181 (proton donor/acceptor) is an active-site residue.

Belongs to the DeoC/FbaB aldolase family. DeoC type 1 subfamily.

The protein resides in the cytoplasm. The enzyme catalyses 2-deoxy-D-ribose 5-phosphate = D-glyceraldehyde 3-phosphate + acetaldehyde. The protein operates within carbohydrate degradation; 2-deoxy-D-ribose 1-phosphate degradation; D-glyceraldehyde 3-phosphate and acetaldehyde from 2-deoxy-alpha-D-ribose 1-phosphate: step 2/2. In terms of biological role, catalyzes a reversible aldol reaction between acetaldehyde and D-glyceraldehyde 3-phosphate to generate 2-deoxy-D-ribose 5-phosphate. This is Deoxyribose-phosphate aldolase from Bacillus cereus (strain ATCC 10987 / NRS 248).